The primary structure comprises 330 residues: PDZ and LIM domain protein 4 (330 aa).

The PDZ domain occupies 8-84; the sequence is RGPSPWGFRL…QLLLSVSRAE (77 aa). Disordered regions lie at residues 106-152 and 163-182; these read EPEP…SSSA and LHISPSQSTDPLKSLPRNRN. Residues 139 to 152 show a composition bias toward polar residues; sequence QHPQPSRPHASSSA. An LIM zinc-binding domain is found at 255-305; that stretch reads CTRCGNGIVGTIVKARDKLYHPECFMCDDCGLNLKQRGYFFIEEQLYCETH.

Interacts (via LIM domain) with PTPN13. Interacts (via PDZ domain) with ACTN1.

Its subcellular location is the cytoplasm. It localises to the cytoskeleton. The protein localises to the cell projection. The protein resides in the dendritic spine. It is found in the early endosome membrane. Its subcellular location is the recycling endosome membrane. It localises to the nucleus. The protein localises to the perinuclear region. The protein resides in the lamellipodium. It is found in the synapse. Its subcellular location is the synaptosome. Its function is as follows. Suppresses SRC activation by recognizing and binding to active SRC and facilitating PTPN13-mediated dephosphorylation of SRC 'Tyr-419' leading to its inactivation. Inactivated SRC dissociates from this protein allowing the initiation of a new SRC inactivation cycle. Involved in reorganization of the actin cytoskeleton. In nonmuscle cells, binds to ACTN1 (alpha-actinin-1), increases the affinity of ACTN1 to F-actin (filamentous actin), and promotes formation of actin stress fibers. Involved in regulation of the synaptic AMPA receptor transport in dendritic spines of hippocampal pyramidal neurons directing the receptors toward an insertion at the postsynaptic membrane. Links endosomal surface-internalized GRIA1-containing AMPA receptors to the alpha-actinin/actin cytoskeleton. Increases AMPA receptor-mediated excitatory postsynaptic currents in neurons. This chain is PDZ and LIM domain protein 4 (PDLIM4), found in Gallus gallus (Chicken).